Here is a 69-residue protein sequence, read N- to C-terminus: Putative membrane protein insertion efficiency factor (69 aa).

Belongs to the UPF0161 family.

The protein resides in the cell inner membrane. Could be involved in insertion of integral membrane proteins into the membrane. This chain is Putative membrane protein insertion efficiency factor, found in Syntrophotalea carbinolica (strain DSM 2380 / NBRC 103641 / GraBd1) (Pelobacter carbinolicus).